The chain runs to 469 residues: Uronate isomerase (469 aa).

It belongs to the metallo-dependent hydrolases superfamily. Uronate isomerase family.

The enzyme catalyses D-glucuronate = D-fructuronate. It carries out the reaction aldehydo-D-galacturonate = keto-D-tagaturonate. It functions in the pathway carbohydrate metabolism; pentose and glucuronate interconversion. The polypeptide is Uronate isomerase (Corynebacterium efficiens (strain DSM 44549 / YS-314 / AJ 12310 / JCM 11189 / NBRC 100395)).